Here is a 153-residue protein sequence, read N- to C-terminus: L-alanine exporter AlaE (153 aa).

Transmembrane regions (helical) follow at residues 16–36 (VAMV…LSEM), 42–62 (LSSR…YGLY), 86–106 (LFAY…AIGA), and 114–134 (AVGS…YFLE).

It belongs to the AlaE exporter family.

It localises to the cell inner membrane. Its function is as follows. Exports L-alanine. This Musicola paradisiaca (strain Ech703) (Dickeya paradisiaca) protein is L-alanine exporter AlaE.